The following is a 115-amino-acid chain: NADH-ubiquinone oxidoreductase chain 3 (115 aa).

3 helical membrane-spanning segments follow: residues 3 to 23 (LMLTLFINTSLASVLVLIAFW), 55 to 75 (FFLVAITFLLFDLEIALLLPL), and 86 to 106 (TMLTMALILISLLAASLAYEW).

The protein belongs to the complex I subunit 3 family. As to quaternary structure, core subunit of respiratory chain NADH dehydrogenase (Complex I) which is composed of 45 different subunits. Interacts with TMEM186. Interacts with TMEM242.

It localises to the mitochondrion inner membrane. It carries out the reaction a ubiquinone + NADH + 5 H(+)(in) = a ubiquinol + NAD(+) + 4 H(+)(out). In terms of biological role, core subunit of the mitochondrial membrane respiratory chain NADH dehydrogenase (Complex I) which catalyzes electron transfer from NADH through the respiratory chain, using ubiquinone as an electron acceptor. Essential for the catalytic activity of complex I. The chain is NADH-ubiquinone oxidoreductase chain 3 from Ceratotherium simum (White rhinoceros).